A 176-amino-acid chain; its full sequence is Protein GrpE (176 aa).

The segment at 1–28 is disordered; it reads MSEQKQEFENENAENSEHLQDENLQNIE.

Belongs to the GrpE family. As to quaternary structure, homodimer.

It is found in the cytoplasm. In terms of biological role, participates actively in the response to hyperosmotic and heat shock by preventing the aggregation of stress-denatured proteins, in association with DnaK and GrpE. It is the nucleotide exchange factor for DnaK and may function as a thermosensor. Unfolded proteins bind initially to DnaJ; upon interaction with the DnaJ-bound protein, DnaK hydrolyzes its bound ATP, resulting in the formation of a stable complex. GrpE releases ADP from DnaK; ATP binding to DnaK triggers the release of the substrate protein, thus completing the reaction cycle. Several rounds of ATP-dependent interactions between DnaJ, DnaK and GrpE are required for fully efficient folding. The chain is Protein GrpE from Campylobacter jejuni subsp. jejuni serotype O:2 (strain ATCC 700819 / NCTC 11168).